Reading from the N-terminus, the 140-residue chain is uncharacterized protein (140 aa).

This is an uncharacterized protein from Xylella fastidiosa (strain Temecula1 / ATCC 700964).